An 82-amino-acid chain; its full sequence is Cytochrome b559 subunit alpha (82 aa).

A helical membrane pass occupies residues 22 to 36; the sequence is VIHAVTLPSIFLAGY. Histidine 24 is a heme binding site.

Belongs to the PsbE/PsbF family. In terms of assembly, heterodimer of an alpha subunit and a beta subunit. PSII is composed of 1 copy each of membrane proteins PsbA, PsbB, PsbC, PsbD, PsbE, PsbF, PsbH, PsbI, PsbJ, PsbK, PsbL, PsbM, PsbT, PsbX, PsbY, Psb30/Ycf12, peripheral proteins PsbO, CyanoQ (PsbQ), PsbU, PsbV and a large number of cofactors. It forms dimeric complexes. Heme b serves as cofactor.

It localises to the cellular thylakoid membrane. Functionally, this b-type cytochrome is tightly associated with the reaction center of photosystem II (PSII). PSII is a light-driven water:plastoquinone oxidoreductase that uses light energy to abstract electrons from H(2)O, generating O(2) and a proton gradient subsequently used for ATP formation. It consists of a core antenna complex that captures photons, and an electron transfer chain that converts photonic excitation into a charge separation. This Prochlorococcus marinus (strain MIT 9303) protein is Cytochrome b559 subunit alpha.